A 64-amino-acid polypeptide reads, in one-letter code: UPF0370 protein YE1145 (64 aa).

Residues 3-23 traverse the membrane as a helical segment; the sequence is WLADYWWVVLIILVGMILNGI. A disordered region spans residues 36-64; the sequence is SNKPEIPPHRDNNAQWDDDDDWPDKDKKK.

It belongs to the UPF0370 family.

It is found in the cell membrane. This Yersinia enterocolitica serotype O:8 / biotype 1B (strain NCTC 13174 / 8081) protein is UPF0370 protein YE1145.